Consider the following 313-residue polypeptide: Uracil-DNA glycosylase (313 aa).

The interval 35–68 is disordered; sequence DEPMPKKCRRPAGPPKGFISTRGDTSPSSDNNHI. Polar residues predominate over residues 56-68; it reads RGDTSPSSDNNHI. Aspartate 153 (proton acceptor) is an active-site residue.

It belongs to the uracil-DNA glycosylase (UDG) superfamily. UNG family.

It localises to the host nucleus. It catalyses the reaction Hydrolyzes single-stranded DNA or mismatched double-stranded DNA and polynucleotides, releasing free uracil.. Its function is as follows. Excises uracil residues from the DNA which can arise as a result of misincorporation of dUMP residues by DNA polymerase or deamination of cytosines. Therefore may reduce deleterious uracil incorporation into the viral genome, particularly in terminally differentiated cells which lack DNA repair enzymes. In Gallus gallus (Chicken), this protein is Uracil-DNA glycosylase (MDV014).